Here is a 261-residue protein sequence, read N- to C-terminus: uncharacterized protein (261 aa).

This sequence belongs to the BtpA family.

This is an uncharacterized protein from Thermococcus kodakarensis (strain ATCC BAA-918 / JCM 12380 / KOD1) (Pyrococcus kodakaraensis (strain KOD1)).